Reading from the N-terminus, the 887-residue chain is Probable alpha/beta-glucosidase agdC (887 aa).

The N-terminal stretch at 1–17 (MLRSLLLLAPMVGAAVA) is a signal peptide. Residues Asn-171, Asn-293, and Asn-373 are each glycosylated (N-linked (GlcNAc...) asparagine). Asp-422 serves as the catalytic Nucleophile. Residue Glu-425 is part of the active site. Residues 457-483 (PRPLPGFPDDFQPPAASKRSVAKGSKV) are disordered. Asp-571 (proton donor) is an active-site residue. Asn-747 and Asn-879 each carry an N-linked (GlcNAc...) asparagine glycan.

It belongs to the glycosyl hydrolase 31 family.

It is found in the secreted. The enzyme catalyses Hydrolysis of terminal, non-reducing (1-&gt;4)-linked alpha-D-glucose residues with release of alpha-D-glucose.. It carries out the reaction Hydrolysis of terminal, non-reducing beta-D-glucosyl residues with release of beta-D-glucose.. In terms of biological role, glucosidase involved in the degradation of cellulosic biomass. Has both alpha- and beta-glucosidase activity. This Aspergillus clavatus (strain ATCC 1007 / CBS 513.65 / DSM 816 / NCTC 3887 / NRRL 1 / QM 1276 / 107) protein is Probable alpha/beta-glucosidase agdC (agdC).